The following is a 725-amino-acid chain: Gamma-tubulin complex component 5 (725 aa).

Positions 222 to 246 (TENEEKMSDNASASSGSDQGPSSRQ) are disordered. A compositionally biased stretch (low complexity) spans 232–244 (ASASSGSDQGPSS).

It belongs to the TUBGCP family. In terms of assembly, component of the gamma-tubulin ring complex (gTuRC) consisting of TUBGCP2, TUBGCP3, TUBGCP4, TUBGCP5 and TUBGCP6 and gamma-tubulin TUBG1 or TUBG2. TUBGCP2, TUBGCP3, TUBGCP4, TUBGCP5 and TUBGCP6 assemble in a 5:5:2:1:1 stoichiometry; each is associated with a gamma-tubulin, thereby arranging 14 gamma-tubulins in a helical manner. Gamma-tubulin at the first position is blocked by TUBGCP3 at the last position, allowing 13 protafilaments to grow into a microtubule. The gTuRC (via TUBGCP3 and TUBGCP6) interacts with ACTB and MZT1; the interactions form a luminal bridge that stabilizes the initial structure during complex assembly. The gTuRC (via TUBGCP2) interacts with MZT2A/MZT2B and CDK5RAP2 (via CM1 motif); the interactions play a role in gTuRC activation.

The protein localises to the cytoplasm. The protein resides in the cytoskeleton. It is found in the microtubule organizing center. It localises to the centrosome. Functionally, component of the gamma-tubulin ring complex (gTuRC) which mediates microtubule nucleation. The gTuRC regulates the minus-end nucleation of alpha-beta tubulin heterodimers that grow into microtubule protafilaments, a critical step in centrosome duplication and spindle formation. This chain is Gamma-tubulin complex component 5 (TUBGCP5), found in Macaca fascicularis (Crab-eating macaque).